Here is a 119-residue protein sequence, read N- to C-terminus: Toxin ICK-8 (119 aa).

An N-terminal signal peptide occupies residues 1-19 (MMKLYSLVIIATLAAAAFA). 4 cysteine pairs are disulfide-bonded: cysteine 59–cysteine 74, cysteine 67–cysteine 80, cysteine 71–cysteine 116, and cysteine 73–cysteine 87.

The protein belongs to the neurotoxin 25 family. ICK-8 subfamily. As to expression, expressed by the venom gland.

It is found in the secreted. In terms of biological role, ion channel inhibitor. In Trittame loki (Brush-footed trapdoor spider), this protein is Toxin ICK-8.